Reading from the N-terminus, the 180-residue chain is Large ribosomal subunit protein uL6 (180 aa).

Belongs to the universal ribosomal protein uL6 family. In terms of assembly, part of the 50S ribosomal subunit.

This protein binds to the 23S rRNA, and is important in its secondary structure. It is located near the subunit interface in the base of the L7/L12 stalk, and near the tRNA binding site of the peptidyltransferase center. In Lachnoclostridium phytofermentans (strain ATCC 700394 / DSM 18823 / ISDg) (Clostridium phytofermentans), this protein is Large ribosomal subunit protein uL6.